Reading from the N-terminus, the 440-residue chain is D-serine dehydratase (440 aa).

Lys116 is modified (N6-(pyridoxal phosphate)lysine).

It belongs to the serine/threonine dehydratase family. DsdA subfamily. As to quaternary structure, monomer. Requires pyridoxal 5'-phosphate as cofactor.

The catalysed reaction is D-serine = pyruvate + NH4(+). This Salmonella schwarzengrund (strain CVM19633) protein is D-serine dehydratase.